Reading from the N-terminus, the 218-residue chain is Protein GrpE (218 aa).

A disordered region spans residues 1 to 75; that stretch reads MTTPNGMPDN…DVDPDLDGDG (75 aa). Over residues 23-40 the composition is skewed to basic and acidic residues; that stretch reads SADRAEQAAEEAAARQAE. Acidic residues predominate over residues 48–75; that stretch reads SEEEISPELEAEINDLLSDVDPDLDGDG.

The protein belongs to the GrpE family. In terms of assembly, homodimer.

The protein localises to the cytoplasm. Functionally, participates actively in the response to hyperosmotic and heat shock by preventing the aggregation of stress-denatured proteins, in association with DnaK and GrpE. It is the nucleotide exchange factor for DnaK and may function as a thermosensor. Unfolded proteins bind initially to DnaJ; upon interaction with the DnaJ-bound protein, DnaK hydrolyzes its bound ATP, resulting in the formation of a stable complex. GrpE releases ADP from DnaK; ATP binding to DnaK triggers the release of the substrate protein, thus completing the reaction cycle. Several rounds of ATP-dependent interactions between DnaJ, DnaK and GrpE are required for fully efficient folding. The chain is Protein GrpE from Corynebacterium glutamicum (strain ATCC 13032 / DSM 20300 / JCM 1318 / BCRC 11384 / CCUG 27702 / LMG 3730 / NBRC 12168 / NCIMB 10025 / NRRL B-2784 / 534).